A 36-amino-acid chain; its full sequence is Photosystem I reaction center subunit VIII (36 aa).

Residues 9-29 (ILVPLVGLIFPALSMALLFIY) traverse the membrane as a helical segment.

This sequence belongs to the PsaI family.

The protein resides in the plastid. It is found in the chloroplast thylakoid membrane. In terms of biological role, may help in the organization of the PsaL subunit. This Pyropia yezoensis (Susabi-nori) protein is Photosystem I reaction center subunit VIII.